We begin with the raw amino-acid sequence, 431 residues long: Adenylosuccinate synthetase (431 aa).

GTP-binding positions include 21–27 (GDEGKGK) and 49–51 (GHT). The active-site Proton acceptor is aspartate 22. Positions 22 and 49 each coordinate Mg(2+). Residues 22–25 (DEGK), 47–50 (NAGH), threonine 138, arginine 152, asparagine 230, threonine 245, and arginine 309 contribute to the IMP site. Residue histidine 50 is the Proton donor of the active site. 305 to 311 (ATTGRPR) is a binding site for substrate. GTP is bound by residues arginine 311, 337 to 339 (KLD), and 419 to 421 (GNG).

It belongs to the adenylosuccinate synthetase family. As to quaternary structure, homodimer. Mg(2+) is required as a cofactor.

The protein resides in the cytoplasm. It carries out the reaction IMP + L-aspartate + GTP = N(6)-(1,2-dicarboxyethyl)-AMP + GDP + phosphate + 2 H(+). Its pathway is purine metabolism; AMP biosynthesis via de novo pathway; AMP from IMP: step 1/2. Plays an important role in the de novo pathway and in the salvage pathway of purine nucleotide biosynthesis. Catalyzes the first committed step in the biosynthesis of AMP from IMP. This Paramecium tetraurelia protein is Adenylosuccinate synthetase.